The following is a 332-amino-acid chain: tRNA U34 carboxymethyltransferase (332 aa).

Residues Lys91, Trp105, Lys110, Gly130, 152–154, 181–182, Met196, Tyr200, and Arg315 each bind carboxy-S-adenosyl-L-methionine; these read DPS and IE.

It belongs to the class I-like SAM-binding methyltransferase superfamily. CmoB family. In terms of assembly, homotetramer.

The catalysed reaction is carboxy-S-adenosyl-L-methionine + 5-hydroxyuridine(34) in tRNA = 5-carboxymethoxyuridine(34) in tRNA + S-adenosyl-L-homocysteine + H(+). In terms of biological role, catalyzes carboxymethyl transfer from carboxy-S-adenosyl-L-methionine (Cx-SAM) to 5-hydroxyuridine (ho5U) to form 5-carboxymethoxyuridine (cmo5U) at position 34 in tRNAs. In Shewanella sp. (strain W3-18-1), this protein is tRNA U34 carboxymethyltransferase.